The chain runs to 476 residues: Proline--tRNA ligase 2 (476 aa).

Belongs to the class-II aminoacyl-tRNA synthetase family. ProS type 3 subfamily. As to quaternary structure, homodimer.

Its subcellular location is the cytoplasm. The catalysed reaction is tRNA(Pro) + L-proline + ATP = L-prolyl-tRNA(Pro) + AMP + diphosphate. Functionally, catalyzes the attachment of proline to tRNA(Pro) in a two-step reaction: proline is first activated by ATP to form Pro-AMP and then transferred to the acceptor end of tRNA(Pro). The polypeptide is Proline--tRNA ligase 2 (Bacillus thuringiensis (strain Al Hakam)).